The following is a 569-amino-acid chain: Urease subunit alpha (569 aa).

One can recognise a Urease domain in the interval 131–569 (GGFDSHIHFI…LPMAQRYFLF (439 aa)). Residues H136, H138, and K219 each contribute to the Ni(2+) site. At K219 the chain carries N6-carboxylysine. H221 provides a ligand contact to substrate. Residues H248 and H274 each contribute to the Ni(2+) site. H322 functions as the Proton donor in the catalytic mechanism. Position 362 (D362) interacts with Ni(2+).

The protein belongs to the metallo-dependent hydrolases superfamily. Urease alpha subunit family. As to quaternary structure, heterotrimer of UreA (gamma), UreB (beta) and UreC (alpha) subunits. Three heterotrimers associate to form the active enzyme. The cofactor is Ni cation. Carboxylation allows a single lysine to coordinate two nickel ions.

Its subcellular location is the cytoplasm. The catalysed reaction is urea + 2 H2O + H(+) = hydrogencarbonate + 2 NH4(+). It participates in nitrogen metabolism; urea degradation; CO(2) and NH(3) from urea (urease route): step 1/1. In Roseobacter denitrificans (strain ATCC 33942 / OCh 114) (Erythrobacter sp. (strain OCh 114)), this protein is Urease subunit alpha.